A 103-amino-acid polypeptide reads, in one-letter code: Small ribosomal subunit protein uS10 (103 aa).

The protein belongs to the universal ribosomal protein uS10 family. In terms of assembly, part of the 30S ribosomal subunit.

Functionally, involved in the binding of tRNA to the ribosomes. In Chlorobaculum tepidum (strain ATCC 49652 / DSM 12025 / NBRC 103806 / TLS) (Chlorobium tepidum), this protein is Small ribosomal subunit protein uS10.